The sequence spans 395 residues: Torsin-3A (395 aa).

An N-terminal signal peptide occupies residues 1-24 (MFFGAFWLLLLLLLPPLRPPGAQG). An N-linked (GlcNAc...) asparagine glycan is attached at asparagine 120. An ATP-binding site is contributed by 165–172 (GWSGTGKN).

Belongs to the ClpA/ClpB family. Torsin subfamily. As to quaternary structure, may not form homohexamers. Post-translationally, N-glycosylated.

Its subcellular location is the cytoplasm. It localises to the endoplasmic reticulum lumen. This Rattus norvegicus (Rat) protein is Torsin-3A (Tor3a).